A 704-amino-acid chain; its full sequence is MDARHQPWFLVFATFLLVSGLPAPEKFVKDIDGGIDQDIFDINQGLGLDLFEGDIKLEANGKNSIIGDHKRWPHTIPYVLEDSLEMNAKGVILNAFERYRLKTCIDFKPWSGEANYISVFKGSGCWSSVGNIHAGKQELSIGTNCDRIATVQHEFLHALGFWHEQSRADRDDYVIIVWDRIQPGKEHNFNIYNDSVSDSLNVPYDYTSVMHYSKTAFQNGTESTIVTRISEFEDVIGQRMDFSDYDLLKLNQLYNCTSSLSFMDSCDFELENICGMIQSSGDSADWQRVSQVLSGPESDHSKMGQCKDSGFFMHFNTSILNEGATAMLESRLLYPKRGFQCLEFYLYNSGSGNDQLNIYTREYTTGQQGGVLTLQRQIKEVPIGSWQLHYVTLQVTKKFRVVFEGLRGPGTSSGGLSIDDINLSETRCPHHIWHIQNFTQILGGQDTSVYSPPFYSSKGYAFQIYMDLRSSTNVGIYFHLISGANDDQLQWPCPWQQATMTLLDQNPDIRQRMFNQRSITTDPTMTSDNGSYFWDRPSKVGVTDVFPNGTQFSRGIGYGTTVFITRERLKSREFIKGDDIYILLTVEDISHLNSTSAVPDPVPTLAVHNACSEVVCQNGGICVVQDGRAECKCPAGEDWWYMGKRCEKRGSTRDTVIIAVSSTVTVFAVMLIITLVSVYCTRRKYRKKARANTAAMTLENQHAF.

A signal peptide spans 1 to 20; it reads MDARHQPWFLVFATFLLVSG. Residues 21–64 constitute a propeptide that is removed on maturation; the sequence is LPAPEKFVKDIDGGIDQDIFDINQGLGLDLFEGDIKLEANGKNS. Residues 21-654 lie on the Extracellular side of the membrane; the sequence is LPAPEKFVKD…RCEKRGSTRD (634 aa). Positions 63–257 constitute a Peptidase M12A domain; that stretch reads NSIIGDHKRW…LKLNQLYNCT (195 aa). 3 disulfides stabilise this stretch: Cys-104/Cys-256, Cys-125/Cys-145, and Cys-266/Cys-428. His-153 serves as a coordination point for Zn(2+). Residue Glu-154 is part of the active site. Residues His-157 and His-163 each coordinate Zn(2+). N-linked (GlcNAc...) asparagine glycans are attached at residues Asn-193, Asn-219, Asn-255, Asn-316, Asn-422, Asn-437, Asn-529, Asn-548, and Asn-593. The region spanning 261–430 is the MAM domain; the sequence is SFMDSCDFEL…INLSETRCPH (170 aa). The 156-residue stretch at 431–586 folds into the MATH domain; sequence HIWHIQNFTQ…GDDIYILLTV (156 aa). The EGF-like domain maps to 607–647; that stretch reads VHNACSEVVCQNGGICVVQDGRAECKCPAGEDWWYMGKRCE. Cystine bridges form between Cys-611–Cys-622, Cys-616–Cys-631, and Cys-633–Cys-646. A helical transmembrane segment spans residues 655 to 678; that stretch reads TVIIAVSSTVTVFAVMLIITLVSV. Topologically, residues 679-704 are cytoplasmic; sequence YCTRRKYRKKARANTAAMTLENQHAF. The residue at position 697 (Thr-697) is a Phosphothreonine.

In terms of assembly, homotetramer consisting of disulfide-linked beta subunits, or heterotetramer of two alpha and two beta subunits formed by non-covalent association of two disulfide-linked heterodimers. Interacts with MBL2 through its carbohydrate moiety. This interaction may inhibit its catalytic activity. Interacts with TSPAN8. Requires Zn(2+) as cofactor. In terms of processing, proteolytically activated by trypsin in the intestinal lumen and kallikrein-related peptidases in other tissues. N-glycosylated; contains high mannose and/or complex biantennary structures. Post-translationally, phosphorylated by PKC at multiple sites of its cytoplasmic part. Phosphorylation dcreases activity at the cell surface, leading to diminished substrate cleavage. As to expression, isoform 1 is expressed in kidney, intestinal brush borders, and salivary ducts. Isoform 2 has been found in carcinoma cells.

It localises to the cell membrane. It is found in the secreted. The catalysed reaction is Hydrolysis of proteins, including azocasein, and peptides. Hydrolysis of 5-His-|-Leu-6, 6-Leu-|-Cys-7, 14-Ala-|-Leu-15 and 19-Cys-|-Gly-20 bonds in insulin B chain.. Its activity is regulated as follows. Strongly inhibited by fetuin-A/AHSG. Inhibited by cysteine and by the metal ion chelators EDTA and 1,10-phenanthroline. Not inhibited by 3,4-dichloroisocourmarin, soybean trypsin inhibitor, or the cysteine proteinase inhibitors iodoacetic acid and E-64. In terms of biological role, membrane metallopeptidase that sheds many membrane-bound proteins. Exhibits a strong preference for acidic amino acids at the P1' position. Known substrates include: FGF19, VGFA, IL1B, IL18, procollagen I and III, E-cadherin, KLK7, gastrin, ADAM10, tenascin-C. The presence of several pro-inflammatory cytokine among substrates implicate MEP1B in inflammation. It is also involved in tissue remodeling due to its capability to degrade extracellular matrix components. The polypeptide is Meprin A subunit beta (Mep1b) (Mus musculus (Mouse)).